The sequence spans 318 residues: Pyrimidine-specific ribonucleoside hydrolase RihA (318 aa).

The active site involves His240.

The protein belongs to the IUNH family. RihA subfamily.

Hydrolyzes cytidine or uridine to ribose and cytosine or uracil, respectively. The sequence is that of Pyrimidine-specific ribonucleoside hydrolase RihA from Shewanella oneidensis (strain ATCC 700550 / JCM 31522 / CIP 106686 / LMG 19005 / NCIMB 14063 / MR-1).